Here is a 309-residue protein sequence, read N- to C-terminus: Aspartate carbamoyltransferase catalytic subunit (309 aa).

Arginine 58 and threonine 59 together coordinate carbamoyl phosphate. Lysine 86 lines the L-aspartate pocket. Residues arginine 108, histidine 136, and glutamine 139 each contribute to the carbamoyl phosphate site. Positions 170 and 224 each coordinate L-aspartate. 2 residues coordinate carbamoyl phosphate: glycine 266 and proline 267.

It belongs to the aspartate/ornithine carbamoyltransferase superfamily. ATCase family. As to quaternary structure, heterododecamer (2C3:3R2) of six catalytic PyrB chains organized as two trimers (C3), and six regulatory PyrI chains organized as three dimers (R2).

It carries out the reaction carbamoyl phosphate + L-aspartate = N-carbamoyl-L-aspartate + phosphate + H(+). Its pathway is pyrimidine metabolism; UMP biosynthesis via de novo pathway; (S)-dihydroorotate from bicarbonate: step 2/3. Catalyzes the condensation of carbamoyl phosphate and aspartate to form carbamoyl aspartate and inorganic phosphate, the committed step in the de novo pyrimidine nucleotide biosynthesis pathway. This chain is Aspartate carbamoyltransferase catalytic subunit, found in Campylobacter concisus (strain 13826).